Consider the following 130-residue polypeptide: Small ribosomal subunit protein uS11 (130 aa).

The protein belongs to the universal ribosomal protein uS11 family. In terms of assembly, part of the 30S ribosomal subunit. Interacts with proteins S7 and S18. Binds to IF-3.

Its function is as follows. Located on the platform of the 30S subunit, it bridges several disparate RNA helices of the 16S rRNA. Forms part of the Shine-Dalgarno cleft in the 70S ribosome. The protein is Small ribosomal subunit protein uS11 of Gloeobacter violaceus (strain ATCC 29082 / PCC 7421).